The sequence spans 441 residues: Maltose-6'-phosphate glucosidase (441 aa).

Position 4–70 (4–70 (FSILIAGGGS…PQIKFSYSTN (67 aa))) interacts with NAD(+). Substrate contacts are provided by Arg-93 and Asn-147. Residue Cys-169 participates in Mn(2+) binding. Asp-170 serves as the catalytic Proton donor. Mn(2+) is bound at residue His-200. The active-site Proton acceptor is Tyr-264. Substrate is bound at residue Arg-284.

The protein belongs to the glycosyl hydrolase 4 family. As to quaternary structure, homotetramer. The cofactor is NAD(+). Requires Mn(2+) as cofactor. Fe(2+) serves as cofactor. Co(2+) is required as a cofactor. It depends on Ni(2+) as a cofactor.

It catalyses the reaction alpha-maltose 6'-phosphate + H2O = D-glucose 6-phosphate + D-glucose. It participates in glycan degradation; maltose degradation. Functionally, hydrolyzes a wide variety of 6-phospho-alpha-D-glucosides including maltose-6'P, trehalose-6P and the 6'-phosphorylated derivatives of the five linkage-isomeric alpha-D-glucosyl-D-fructoses: trehalulose-6'P, turanose-6'P, maltulose-6'P, leucrose-6'P, and palatinose-6'P. However, sucrose-6P is not a substrate for MalH, and this enzyme also fails to hydrolyze beta-O-linked phosphorylated disaccharides such as cellobiose-6'P and gentobiose-6'P. The protein is Maltose-6'-phosphate glucosidase (malH) of Fusobacterium mortiferum.